The chain runs to 254 residues: 3-dehydroquinate dehydratase (254 aa).

3-dehydroquinate contacts are provided by residues 47–49 (EWR) and R83. H144 serves as the catalytic Proton donor/acceptor. The active-site Schiff-base intermediate with substrate is K171. Residues R214, S233, and Q237 each contribute to the 3-dehydroquinate site.

Belongs to the type-I 3-dehydroquinase family. Homodimer.

It carries out the reaction 3-dehydroquinate = 3-dehydroshikimate + H2O. Its pathway is metabolic intermediate biosynthesis; chorismate biosynthesis; chorismate from D-erythrose 4-phosphate and phosphoenolpyruvate: step 3/7. Functionally, involved in the third step of the chorismate pathway, which leads to the biosynthesis of aromatic amino acids. Catalyzes the cis-dehydration of 3-dehydroquinate (DHQ) and introduces the first double bond of the aromatic ring to yield 3-dehydroshikimate. The protein is 3-dehydroquinate dehydratase of Clostridium botulinum (strain Eklund 17B / Type B).